The primary structure comprises 128 residues: Small ribosomal subunit protein uS8c (128 aa).

The protein belongs to the universal ribosomal protein uS8 family. As to quaternary structure, part of the 30S ribosomal subunit.

Its subcellular location is the plastid. It localises to the chloroplast. Its function is as follows. One of the primary rRNA binding proteins, it binds directly to 16S rRNA central domain where it helps coordinate assembly of the platform of the 30S subunit. In Gnetum parvifolium (Small-leaved jointfir), this protein is Small ribosomal subunit protein uS8c (rps8).